A 521-amino-acid polypeptide reads, in one-letter code: Phospholipase C B (521 aa).

Positions 1 to 39 (MGSEHPVDGMTRRQFFAKAAAATTAGAFMSLAGPIIEKA) form a signal peptide, tat-type signal. The tract at residues 501–521 (FPQSMPTQETAPTRGIPSGLC) is disordered.

This sequence belongs to the bacterial phospholipase C family. Predicted to be exported by the Tat system. The position of the signal peptide cleavage has not been experimentally proven.

The protein resides in the secreted. The protein localises to the cell wall. It carries out the reaction a 1,2-diacyl-sn-glycero-3-phosphocholine + H2O = phosphocholine + a 1,2-diacyl-sn-glycerol + H(+). Functionally, involved in virulence. Induces cytotoxic effects on mouse macrophage cell lines, via direct or indirect enzymatic hydrolysis of cell membrane phospholipids. Hydrolyzes phosphatidylcholine. This is Phospholipase C B from Mycobacterium tuberculosis (strain CDC 1551 / Oshkosh).